Consider the following 335-residue polypeptide: GTPase Obg (335 aa).

The Obg domain maps to 1–158; the sequence is MFVDQITLEL…RLVELELKLI (158 aa). Positions 159-334 constitute an OBG-type G domain; it reads ADIGLVGFPN…LYDLFKSKLS (176 aa). Residues 165–172, 190–194, 215–218, 285–288, and 315–317 each bind GTP; these read GFPNAGKS, FTTLH, DIPG, NKID, and SGL. Positions 172 and 192 each coordinate Mg(2+).

The protein belongs to the TRAFAC class OBG-HflX-like GTPase superfamily. OBG GTPase family. In terms of assembly, monomer. Mg(2+) is required as a cofactor.

The protein resides in the cytoplasm. An essential GTPase which binds GTP, GDP and possibly (p)ppGpp with moderate affinity, with high nucleotide exchange rates and a fairly low GTP hydrolysis rate. Plays a role in control of the cell cycle, stress response, ribosome biogenesis and in those bacteria that undergo differentiation, in morphogenesis control. The sequence is that of GTPase Obg from Chlamydia trachomatis serovar A (strain ATCC VR-571B / DSM 19440 / HAR-13).